Consider the following 185-residue polypeptide: Ribosome-recycling factor (185 aa).

The protein belongs to the RRF family.

Its subcellular location is the cytoplasm. In terms of biological role, responsible for the release of ribosomes from messenger RNA at the termination of protein biosynthesis. May increase the efficiency of translation by recycling ribosomes from one round of translation to another. In Coxiella burnetii (strain CbuK_Q154) (Coxiella burnetii (strain Q154)), this protein is Ribosome-recycling factor.